Reading from the N-terminus, the 625-residue chain is tRNA uridine 5-carboxymethylaminomethyl modification enzyme MnmG (625 aa).

11–16 (GAGHAG) serves as a coordination point for FAD. Residue 271 to 285 (GPRYCPSIETKIVTF) participates in NAD(+) binding.

The protein belongs to the MnmG family. Homodimer. Heterotetramer of two MnmE and two MnmG subunits. FAD is required as a cofactor.

It localises to the cytoplasm. Its function is as follows. NAD-binding protein involved in the addition of a carboxymethylaminomethyl (cmnm) group at the wobble position (U34) of certain tRNAs, forming tRNA-cmnm(5)s(2)U34. This is tRNA uridine 5-carboxymethylaminomethyl modification enzyme MnmG from Parabacteroides distasonis (strain ATCC 8503 / DSM 20701 / CIP 104284 / JCM 5825 / NCTC 11152).